A 330-amino-acid polypeptide reads, in one-letter code: Apolipoprotein E (330 aa).

Positions 1–18 (MKVLWAALVVALLAGCWA) are cleaved as a signal peptide. A disordered region spans residues 21 to 43 (EPESPLQGKPEPELEPELEPKRE). A run of 7 repeats spans residues 96 to 117 (TLME…EQLG), 118 to 139 (PMAS…ARLR), 140 to 161 (SDME…AMLG), 162 to 183 (QSTE…KRVL), 184 to 205 (RDAE…EGAE), 206 to 227 (RSVS…TRHA), and 247 to 268 (GRLE…EQME). Residues 96–268 (TLMEETMKEI…HLDEVREQME (173 aa)) form a 7 X 22 AA approximate tandem repeats region. Position 159 is a methionine sulfoxide (Met159). Residue Ser163 is modified to Phosphoserine. Residues 174 to 184 (HMRKLRKRVLR) form an LDL and other lipoprotein receptors binding region. 178–181 (LRKR) lines the heparin pocket. Residues 226-303 (HANLATQPLR…SWFEPLVEDM (78 aa)) form a lipid-binding and lipoprotein association region. 242-249 (GQQLRGRL) is a heparin binding site. The homooligomerization stretch occupies residues 279 to 330 (NQMRQQVEAFQARLKSWFEPLVEDMQRQWAGLVEKVQVAVGTSPTTPPLETK). The interval 291–303 (RLKSWFEPLVEDM) is specificity for association with VLDL.

This sequence belongs to the apolipoprotein A1/A4/E family. As to quaternary structure, homotetramer. May interact with ABCA1; functionally associated with ABCA1 in the biogenesis of HDLs. May interact with APP/A4 amyloid-beta peptide; the interaction is extremely stable in vitro but its physiological significance is unclear. May interact with MAPT. May interact with MAP2. In the cerebrospinal fluid, interacts with secreted SORL1. Interacts with PMEL; this allows the loading of PMEL luminal fragment on ILVs to induce fibril nucleation. In terms of processing, APOE exists as multiple glycosylated and sialylated glycoforms within cells and in plasma. The extent of glycosylation and sialylation are tissue and context specific. Post-translationally, glycated in plasma VLDL. Phosphorylated by FAM20C in the extracellular medium.

The protein resides in the secreted. It localises to the extracellular space. It is found in the extracellular matrix. Its subcellular location is the extracellular vesicle. The protein localises to the endosome. The protein resides in the multivesicular body. Its function is as follows. APOE is an apolipoprotein, a protein associating with lipid particles, that mainly functions in lipoprotein-mediated lipid transport between organs via the plasma and interstitial fluids. APOE is a core component of plasma lipoproteins and is involved in their production, conversion and clearance. Apolipoproteins are amphipathic molecules that interact both with lipids of the lipoprotein particle core and the aqueous environment of the plasma. As such, APOE associates with chylomicrons, chylomicron remnants, very low density lipoproteins (VLDL) and intermediate density lipoproteins (IDL) but shows a preferential binding to high-density lipoproteins (HDL). It also binds a wide range of cellular receptors including the LDL receptor/LDLR, the LDL receptor-related proteins LRP1, LRP2 and LRP8 and the very low-density lipoprotein receptor/VLDLR that mediate the cellular uptake of the APOE-containing lipoprotein particles. Finally, APOE also has a heparin-binding activity and binds heparan-sulfate proteoglycans on the surface of cells, a property that supports the capture and the receptor-mediated uptake of APOE-containing lipoproteins by cells. A main function of APOE is to mediate lipoprotein clearance through the uptake of chylomicrons, VLDLs, and HDLs by hepatocytes. APOE is also involved in the biosynthesis by the liver of VLDLs as well as their uptake by peripheral tissues ensuring the delivery of triglycerides and energy storage in muscle, heart and adipose tissues. By participating in the lipoprotein-mediated distribution of lipids among tissues, APOE plays a critical role in plasma and tissues lipid homeostasis. APOE is also involved in two steps of reverse cholesterol transport, the HDLs-mediated transport of cholesterol from peripheral tissues to the liver, and thereby plays an important role in cholesterol homeostasis. First, it is functionally associated with ABCA1 in the biogenesis of HDLs in tissues. Second, it is enriched in circulating HDLs and mediates their uptake by hepatocytes. APOE also plays an important role in lipid transport in the central nervous system, regulating neuron survival and sprouting. This chain is Apolipoprotein E (APOE), found in Neomonachus schauinslandi (Hawaiian monk seal).